A 521-amino-acid chain; its full sequence is Tubulin-specific chaperone E (521 aa).

Positions 24-68 (GPVPPTAGVWLGVEWDHPERGKHDGSHDGVRYFTCRHPTGGSFVR) constitute a CAP-Gly domain. LRR repeat units follow at residues 147 to 168 (FVQS…AAIT), 173 to 194 (SLQE…SSLS), 199 to 220 (HLRV…HCAP), 224 to 245 (QVEE…EHVL), 247 to 268 (ALTV…EISH), 271 to 292 (RLER…DVPA), and 301 to 322 (ALKE…NELE). One can recognise an LRRCT domain in the interval 335 to 377 (NPLLHKEKNLETARQIMIARLGQLELLDMRQILSDERRGAELD).

This sequence belongs to the TBCE family. In terms of assembly, supercomplex made of cofactors A to E. Cofactors A and D function by capturing and stabilizing tubulin in a quasi-native conformation. Cofactor E binds to the cofactor D-tubulin complex; interaction with cofactor C then causes the release of tubulin polypeptides that are committed to the native state.

It localises to the cytoplasm. The protein localises to the cytoskeleton. Its function is as follows. Tubulin-folding protein; involved in the second step of the tubulin folding pathway. This is Tubulin-specific chaperone E (tbce) from Danio rerio (Zebrafish).